Consider the following 415-residue polypeptide: MERSHIRDVDPDAADALSSERQRQEDTLAMIASENHVSEAVLEAQGSALTNKYAEGYPGERYYAGCEYADEIESLAIERAEELWGAEHVNVQPHSGTQANMAVYLTALDPGDKILSLDLTHGGHLSHGHPANFTGQTYTVEQYEVDPETGYIDYEGLKTKADEFNPDIIVSGYSAYPREVEFERIQEAADLADAYHLADIAHITGLVAAGVHTSPVGVADFVTGSTHKTIRAGRGGIIMCNEEHADDIDNSVFPGAQGGPLMHNVAGKAVGFKEALSDEFEAYAEQTVKNAEELANTLTDAGLSVVSGGTDNHLVLVDLRPSHPETTGKEVEAALESAGIIMNANTVPGETRSAFNPSGIRVGTPALTTRGFTESTVREVGELMIELIDDPTDDEAIAAVSDRVDTLTDEYPLYR.

The span at M1–D10 shows a compositional bias: basic and acidic residues. The tract at residues M1–R21 is disordered. (6S)-5,6,7,8-tetrahydrofolate contacts are provided by residues L119 and G123–L125. An N6-(pyridoxal phosphate)lysine modification is found at K228. S353–F355 provides a ligand contact to (6S)-5,6,7,8-tetrahydrofolate.

It belongs to the SHMT family. Homodimer. It depends on pyridoxal 5'-phosphate as a cofactor.

It is found in the cytoplasm. It carries out the reaction (6R)-5,10-methylene-5,6,7,8-tetrahydrofolate + glycine + H2O = (6S)-5,6,7,8-tetrahydrofolate + L-serine. The protein operates within one-carbon metabolism; tetrahydrofolate interconversion. Its pathway is amino-acid biosynthesis; glycine biosynthesis; glycine from L-serine: step 1/1. In terms of biological role, catalyzes the reversible interconversion of serine and glycine with tetrahydrofolate (THF) serving as the one-carbon carrier. Also exhibits THF-independent aldolase activity toward beta-hydroxyamino acids, producing glycine and aldehydes, via a retro-aldol mechanism. In Haloquadratum walsbyi (strain DSM 16790 / HBSQ001), this protein is Serine hydroxymethyltransferase.